The chain runs to 109 residues: uncharacterized protein (109 aa).

The segment at 67–96 is disordered; it reads YFGNKLWRPTPRSGQSGQSRPKTGPHGSQR. Residues 78 to 87 show a composition bias toward polar residues; that stretch reads RSGQSGQSRP.

This is an uncharacterized protein from Saccharomyces cerevisiae (strain ATCC 204508 / S288c) (Baker's yeast).